A 500-amino-acid polypeptide reads, in one-letter code: Aldehyde dehydrogenase, mitochondrial (500 aa).

3 positions are modified to N6-acetyllysine: Lys35, Lys56, and Lys142. 245 to 250 lines the NAD(+) pocket; the sequence is GSTEVG. The active-site Proton acceptor is Glu268. The active-site Nucleophile is Cys302. 6 positions are modified to N6-acetyllysine: Lys358, Lys366, Lys409, Lys411, Lys424, and Lys434.

It belongs to the aldehyde dehydrogenase family. In terms of assembly, homotetramer. Post-translationally, in response to mitochondrial stress, the precursor protein is ubiquitinated by the SIFI complex in the cytoplasm before mitochondrial import, leading to its degradation. Within the SIFI complex, UBR4 initiates ubiquitin chain that are further elongated or branched by KCMF1.

Its subcellular location is the mitochondrion matrix. It carries out the reaction an aldehyde + NAD(+) + H2O = a carboxylate + NADH + 2 H(+). It participates in alcohol metabolism; ethanol degradation; acetate from ethanol: step 2/2. Its function is as follows. Required for clearance of cellular formaldehyde, a cytotoxic and carcinogenic metabolite that induces DNA damage. This Equus caballus (Horse) protein is Aldehyde dehydrogenase, mitochondrial (ALDH2).